Consider the following 213-residue polypeptide: Octanoyltransferase (213 aa).

Residues 32-207 enclose the BPL/LPL catalytic domain; that stretch reads ESTLDEIWLV…NILALLNNPD (176 aa). Substrate-binding positions include 71-78, 138-140, and 151-153; these read RGGQVTYH, SLG, and GLA. Cys169 functions as the Acyl-thioester intermediate in the catalytic mechanism.

This sequence belongs to the LipB family.

Its subcellular location is the cytoplasm. It catalyses the reaction octanoyl-[ACP] + L-lysyl-[protein] = N(6)-octanoyl-L-lysyl-[protein] + holo-[ACP] + H(+). It participates in protein modification; protein lipoylation via endogenous pathway; protein N(6)-(lipoyl)lysine from octanoyl-[acyl-carrier-protein]: step 1/2. Its function is as follows. Catalyzes the transfer of endogenously produced octanoic acid from octanoyl-acyl-carrier-protein onto the lipoyl domains of lipoate-dependent enzymes. Lipoyl-ACP can also act as a substrate although octanoyl-ACP is likely to be the physiological substrate. The protein is Octanoyltransferase of Escherichia coli O17:K52:H18 (strain UMN026 / ExPEC).